Consider the following 127-residue polypeptide: Large ribosomal subunit protein bL19 (127 aa).

This sequence belongs to the bacterial ribosomal protein bL19 family.

This protein is located at the 30S-50S ribosomal subunit interface and may play a role in the structure and function of the aminoacyl-tRNA binding site. The protein is Large ribosomal subunit protein bL19 of Paraburkholderia phymatum (strain DSM 17167 / CIP 108236 / LMG 21445 / STM815) (Burkholderia phymatum).